The following is a 427-amino-acid chain: Enolase (427 aa).

(2R)-2-phosphoglycerate is bound at residue Gln162. Residue Glu204 is the Proton donor of the active site. 3 residues coordinate Mg(2+): Asp241, Glu284, and Asp311. 4 residues coordinate (2R)-2-phosphoglycerate: Lys336, Arg365, Ser366, and Lys387. The Proton acceptor role is filled by Lys336.

It belongs to the enolase family. Mg(2+) is required as a cofactor.

It is found in the cytoplasm. The protein localises to the secreted. It localises to the cell surface. The catalysed reaction is (2R)-2-phosphoglycerate = phosphoenolpyruvate + H2O. It participates in carbohydrate degradation; glycolysis; pyruvate from D-glyceraldehyde 3-phosphate: step 4/5. In terms of biological role, catalyzes the reversible conversion of 2-phosphoglycerate (2-PG) into phosphoenolpyruvate (PEP). It is essential for the degradation of carbohydrates via glycolysis. This Corynebacterium kroppenstedtii (strain DSM 44385 / JCM 11950 / CIP 105744 / CCUG 35717) protein is Enolase.